We begin with the raw amino-acid sequence, 433 residues long: Histidine--tRNA ligase (433 aa).

It belongs to the class-II aminoacyl-tRNA synthetase family. In terms of assembly, homodimer.

The protein localises to the cytoplasm. It catalyses the reaction tRNA(His) + L-histidine + ATP = L-histidyl-tRNA(His) + AMP + diphosphate + H(+). The polypeptide is Histidine--tRNA ligase (Pseudothermotoga lettingae (strain ATCC BAA-301 / DSM 14385 / NBRC 107922 / TMO) (Thermotoga lettingae)).